A 155-amino-acid polypeptide reads, in one-letter code: 3-hydroxyacyl-[acyl-carrier-protein] dehydratase FabZ (155 aa).

The active site involves His-57.

The protein belongs to the thioester dehydratase family. FabZ subfamily.

It is found in the cytoplasm. The catalysed reaction is a (3R)-hydroxyacyl-[ACP] = a (2E)-enoyl-[ACP] + H2O. Functionally, involved in unsaturated fatty acids biosynthesis. Catalyzes the dehydration of short chain beta-hydroxyacyl-ACPs and long chain saturated and unsaturated beta-hydroxyacyl-ACPs. The chain is 3-hydroxyacyl-[acyl-carrier-protein] dehydratase FabZ from Cereibacter sphaeroides (strain KD131 / KCTC 12085) (Rhodobacter sphaeroides).